We begin with the raw amino-acid sequence, 487 residues long: L-tartrate/succinate antiporter (487 aa).

Helical transmembrane passes span 10–30 (YLAP…AGLE), 33–53 (TWLY…EPVP), 54–74 (GAVV…WLLF), 93–113 (WAVS…FMFG), 137–157 (TLFL…VTPS), 189–209 (IGSY…AIFL), 236–256 (FLGM…LAYV), 292–312 (LMVG…AAMV), 313–333 (GYSV…DIVS), 340–360 (VFFW…TGFI), 370–390 (SLSG…FYLL), 393–413 (FFAS…AAAL), 418–438 (IPLP…SILT), and 465–485 (IFGL…MPVV).

This sequence belongs to the SLC13A/DASS transporter (TC 2.A.47) family. DIT1 subfamily.

It is found in the cell inner membrane. The enzyme catalyses (2R,3R)-tartrate(out) + succinate(in) = (2R,3R)-tartrate(in) + succinate(out). Its function is as follows. Catalyzes the uptake of tartrate in exchange for intracellular succinate. Essential for anaerobic L-tartrate fermentation. The chain is L-tartrate/succinate antiporter (ttdT) from Escherichia coli O6:K15:H31 (strain 536 / UPEC).